A 360-amino-acid polypeptide reads, in one-letter code: Homeobox protein ceh-60 (360 aa).

Positions 1 to 82 are PBC-A; that stretch reads MDNLIKQLQM…ENPTFPLEEV (82 aa). In terms of domain architecture, PBC spans 1–179; that stretch reads MDNLIKQLQM…ILVLRREIEQ (179 aa). The tract at residues 85–179 is PBC-B; it reads EKDEEWQPLE…ILVLRREIEQ (95 aa). Residues 180–242 constitute a DNA-binding region (homeobox); it reads QGRKRRNFDK…NQRIRTKQQA (63 aa).

This sequence belongs to the TALE/PBX homeobox family. As to quaternary structure, forms a heterodimer with homeobox unc-62. Interacts with pqm-1.

The protein localises to the nucleus. In terms of biological role, probable transcription regulator which binds to DNA, repressing genes involved in longevity and stress, while activating genes involved in reproduction, such as the vitellogenins. Associates with homeobox unc-62 to regulate gene expression, including repression of genes involved in innate immunity. Required for intestinal expression of vitellogenin genes. Negatively modulates longevity, probably independently of effects on vitellogenesis. Involved in lipid homeostasis, contributing to the reallocation of intestinal lipids to the germline and to the formation of the cuticle. Associates with transcriptional regulator pqm-1 at the daf-16 associated element within the promoters of stress-responsive genes to regulate expression. This Caenorhabditis elegans protein is Homeobox protein ceh-60.